The sequence spans 68 residues: EQCGDDVCGAGHCCSEYPPMHCKRVGQLYDLCMASKATKNSGNHLFFCPCDEGMYCDMNSWSCQKRTA.

Cystine bridges form between cysteine 3–cysteine 14, cysteine 8–cysteine 22, cysteine 13–cysteine 48, cysteine 32–cysteine 56, and cysteine 50–cysteine 63.

Belongs to the MIT-like AcTx family. As to expression, expressed by the venom gland.

Its subcellular location is the secreted. In Hadronyche versuta (Blue mountains funnel-web spider), this protein is U1-hexatoxin-Hv1a.